We begin with the raw amino-acid sequence, 278 residues long: uncharacterized protein (278 aa).

The N-terminal stretch at 1–32 is a signal peptide; sequence MSSASFTTKALSVLAALTAASAPLVAASPAHA. The Peptidase S1 domain occupies 33-236; it reads LANARNVTGS…HAEWIAYYTG (204 aa). Residues cysteine 59 and cysteine 75 are joined by a disulfide bond. Residues histidine 74, aspartate 123, and serine 189 each act as charge relay system in the active site.

It belongs to the peptidase S1 family.

The protein resides in the secreted. This is an uncharacterized protein from Corynebacterium glutamicum (strain R).